The chain runs to 257 residues: Putative carboxymethylenebutenolidase (257 aa).

Residues C148, D195, and H226 contribute to the active site.

It belongs to the dienelactone hydrolase family.

It catalyses the reaction 2-(5-oxo-2,5-dihydrofuran-2-ylidene)acetate + H2O = 4-oxohex-2-enedioate + H(+). The sequence is that of Putative carboxymethylenebutenolidase from Saccharolobus solfataricus (strain ATCC 35092 / DSM 1617 / JCM 11322 / P2) (Sulfolobus solfataricus).